Reading from the N-terminus, the 208-residue chain is Uracil phosphoribosyltransferase (208 aa).

5-phospho-alpha-D-ribose 1-diphosphate is bound by residues arginine 77, arginine 102, and 129 to 137 (DPMLATGNS). Uracil contacts are provided by residues isoleucine 193 and 198 to 200 (GDA). Residue aspartate 199 participates in 5-phospho-alpha-D-ribose 1-diphosphate binding.

This sequence belongs to the UPRTase family. Mg(2+) is required as a cofactor.

The enzyme catalyses UMP + diphosphate = 5-phospho-alpha-D-ribose 1-diphosphate + uracil. Its pathway is pyrimidine metabolism; UMP biosynthesis via salvage pathway; UMP from uracil: step 1/1. With respect to regulation, allosterically activated by GTP. Catalyzes the conversion of uracil and 5-phospho-alpha-D-ribose 1-diphosphate (PRPP) to UMP and diphosphate. The chain is Uracil phosphoribosyltransferase from Mycoplasmopsis agalactiae (strain NCTC 10123 / CIP 59.7 / PG2) (Mycoplasma agalactiae).